Consider the following 859-residue polypeptide: Probable helicase A859L (859 aa).

Positions Tyr-178–Ala-349 constitute a Helicase ATP-binding domain. Met-191–Thr-198 serves as a coordination point for ATP. Positions Asp-298 to His-301 match the DEAH box motif. The region spanning Gln-394–Ser-553 is the Helicase C-terminal domain.

It belongs to the asfivirus helicase A859L family.

The polypeptide is Probable helicase A859L (Ornithodoros (relapsing fever ticks)).